The chain runs to 83 residues: Arminin 4364 (83 aa).

Residues 1-18 form the signal peptide; that stretch reads MKTVFAILFLAFIALTYA. Residues 19–55 constitute a propeptide that is removed on maturation; sequence RSYEDVKEEIKNEVEKEILEDLEKETDELNERKINDA. A Valine amide modification is found at Val80.

It belongs to the arminin family. As to expression, expressed in entodermal epithelium along the body column.

It is found in the secreted. The protein resides in the target cell membrane. In terms of biological role, antimicrobial peptide with a broad-spectrum antimicrobial activity. Keeps its antibacterial activity under a wide range of salt concentrations that mimic physiological conditions of human blood, which is surprising, since Hydra is an obligate freshwater animal with nearly no salt tolerance. Does not affect red blood cells. The chain is Arminin 4364 from Hydra vulgaris (Hydra).